The sequence spans 396 residues: Calsequestrin-1 (396 aa).

A signal peptide spans 1–34 (MSATDRMGPRAVPGLRLALLLLLVLGTPKSGVQG). Y43 bears the Phosphotyrosine mark. Position 81 is a phosphoserine (S81). The residue at position 124 (T124) is a Phosphothreonine. Residue S216 is modified to Phosphoserine. N350 carries N-linked (GlcNAc...) asparagine glycosylation.

Belongs to the calsequestrin family. In terms of assembly, monomer; increases in response to a depletion of intracellular calcium. Homodimer. Homotetramer and homopolymer. Can form linear homooligomers. Ca(2+) ions promote oligomerization. Interacts (via C-terminal end and preferentially with the monomeric form) with STIM1; this interaction increases in response to a depletion of intracellular calcium, decreases both STIM1 aggregation and clustering, interaction of STIM1 with ORAI1 and store-operated Ca(2+) entry (SOCE) activity. Interacts with ASPH and TRDN. N-glycosylated. Expressed in myoblasts (at protein level).

The protein resides in the endoplasmic reticulum. Its subcellular location is the sarcoplasmic reticulum. It localises to the sarcoplasmic reticulum lumen. It is found in the sarcoplasmic reticulum membrane. The protein localises to the mitochondrion matrix. Its function is as follows. Calsequestrin is a high-capacity, moderate affinity, calcium-binding protein and thus acts as an internal calcium store in muscle. Calcium ions are bound by clusters of acidic residues at the protein surface, often at the interface between subunits. Can bind around 80 Ca(2+) ions. Regulates the release of lumenal Ca(2+) via the calcium release channel RYR1; this plays an important role in triggering muscle contraction. Negatively regulates store-operated Ca(2+) entry (SOCE) activity. In Homo sapiens (Human), this protein is Calsequestrin-1 (CASQ1).